The primary structure comprises 244 residues: MSLVLLPAVDVVNGEAVRLVQGEAGSETGYGSPRDAALAWQNDGAEWVHIVDLDAAFGRGSNRELLADVVGELDVQVELSGGIRDDASLEAALATGCGRVNLGTAAIENPEWCARAIAKYGEKIAVGLDVRLVDGEYQLRGRGWVTEGGNLWETLARLDKDGCSRYVVTDVSKDGTLTGPNLELLAQVCAATDAPVVASGGVSTIDDLRAIAGLVDQGVEGSIVGKALYAGRFTLPEALAAVSG.

D10 functions as the Proton acceptor in the catalytic mechanism. D129 acts as the Proton donor in catalysis.

It belongs to the HisA/HisF family.

It localises to the cytoplasm. It carries out the reaction 1-(5-phospho-beta-D-ribosyl)-5-[(5-phospho-beta-D-ribosylamino)methylideneamino]imidazole-4-carboxamide = 5-[(5-phospho-1-deoxy-D-ribulos-1-ylimino)methylamino]-1-(5-phospho-beta-D-ribosyl)imidazole-4-carboxamide. It functions in the pathway amino-acid biosynthesis; L-histidine biosynthesis; L-histidine from 5-phospho-alpha-D-ribose 1-diphosphate: step 4/9. The sequence is that of 1-(5-phosphoribosyl)-5-[(5-phosphoribosylamino)methylideneamino] imidazole-4-carboxamide isomerase from Rhodococcus jostii (strain RHA1).